The primary structure comprises 141 residues: uncharacterized protein (141 aa).

5 helical membrane-spanning segments follow: residues Phe7–Val27, Phe34–Thr54, Leu69–Leu89, Val97–Gly117, and Asn121–Phe141. Residues Ala14–Val140 form the EamA domain.

This sequence belongs to the EamA transporter family.

The protein resides in the cell membrane. This is an uncharacterized protein from Sinorhizobium sp.